Here is a 234-residue protein sequence, read N- to C-terminus: 7-cyano-7-deazaguanine synthase (234 aa).

13–23 contacts ATP; the sequence is LSGGQDSTTCL. Zn(2+) is bound by residues cysteine 193, cysteine 201, cysteine 204, and cysteine 207.

This sequence belongs to the QueC family. Requires Zn(2+) as cofactor.

The enzyme catalyses 7-carboxy-7-deazaguanine + NH4(+) + ATP = 7-cyano-7-deazaguanine + ADP + phosphate + H2O + H(+). Its pathway is purine metabolism; 7-cyano-7-deazaguanine biosynthesis. In terms of biological role, catalyzes the ATP-dependent conversion of 7-carboxy-7-deazaguanine (CDG) to 7-cyano-7-deazaguanine (preQ(0)). In Chromobacterium violaceum (strain ATCC 12472 / DSM 30191 / JCM 1249 / CCUG 213 / NBRC 12614 / NCIMB 9131 / NCTC 9757 / MK), this protein is 7-cyano-7-deazaguanine synthase.